Reading from the N-terminus, the 331-residue chain is Cilia- and flagella-associated protein 119 (331 aa).

Residue Ser-34 is modified to Phosphoserine. 2 disordered regions span residues 236-271 (LWPE…PEPE) and 309-331 (SSKL…SKTK). Residues 286 to 317 (VNKELEQLQGLVEERLKASEERLSSKLTALER) are a coiled coil.

The protein localises to the cell projection. It localises to the cilium. It is found in the flagellum. The protein resides in the cytoplasmic vesicle. Its subcellular location is the secretory vesicle. The protein localises to the acrosome. It localises to the cytoplasm. This chain is Cilia- and flagella-associated protein 119, found in Homo sapiens (Human).